The sequence spans 460 residues: Argininosuccinate lyase (460 aa).

This sequence belongs to the lyase 1 family. Argininosuccinate lyase subfamily.

Its subcellular location is the cytoplasm. The enzyme catalyses 2-(N(omega)-L-arginino)succinate = fumarate + L-arginine. It functions in the pathway amino-acid biosynthesis; L-arginine biosynthesis; L-arginine from L-ornithine and carbamoyl phosphate: step 3/3. The sequence is that of Argininosuccinate lyase from Mannheimia succiniciproducens (strain KCTC 0769BP / MBEL55E).